The chain runs to 118 residues: Ribosome-binding factor A (118 aa).

Belongs to the RbfA family. In terms of assembly, monomer. Binds 30S ribosomal subunits, but not 50S ribosomal subunits or 70S ribosomes.

It localises to the cytoplasm. Functionally, one of several proteins that assist in the late maturation steps of the functional core of the 30S ribosomal subunit. Associates with free 30S ribosomal subunits (but not with 30S subunits that are part of 70S ribosomes or polysomes). Required for efficient processing of 16S rRNA. May interact with the 5'-terminal helix region of 16S rRNA. In Thermodesulfovibrio yellowstonii (strain ATCC 51303 / DSM 11347 / YP87), this protein is Ribosome-binding factor A.